Reading from the N-terminus, the 229-residue chain is Peptidyl-tRNA hydrolase (229 aa).

A tRNA-binding site is contributed by Tyr-17. The active-site Proton acceptor is His-22. TRNA is bound by residues Phe-74, Asn-76, and Asn-122. The tract at residues 194–229 is disordered; it reads AGKTTRPRKPVRQTANAEASNNSPEASATPQNKDNT. The segment covering 207-223 has biased composition (low complexity); sequence TANAEASNNSPEASATP.

The protein belongs to the PTH family. As to quaternary structure, monomer.

It localises to the cytoplasm. The enzyme catalyses an N-acyl-L-alpha-aminoacyl-tRNA + H2O = an N-acyl-L-amino acid + a tRNA + H(+). Functionally, hydrolyzes ribosome-free peptidyl-tRNAs (with 1 or more amino acids incorporated), which drop off the ribosome during protein synthesis, or as a result of ribosome stalling. Its function is as follows. Catalyzes the release of premature peptidyl moieties from peptidyl-tRNA molecules trapped in stalled 50S ribosomal subunits, and thus maintains levels of free tRNAs and 50S ribosomes. The protein is Peptidyl-tRNA hydrolase of Desulfovibrio desulfuricans (strain ATCC 27774 / DSM 6949 / MB).